The sequence spans 240 residues: Oxygen-insensitive NADPH nitroreductase (240 aa).

FMN is bound by residues H11–R15, S39, Q67, Y128–G131, and K167–R169.

It belongs to the flavin oxidoreductase frp family. Homodimer. It depends on FMN as a cofactor.

In terms of biological role, catalyzes the reduction of nitroaromatic compounds using NADPH. Has a broad electron acceptor specificity. Reduces nitrofurazone by a ping-pong bi-bi mechanism possibly to generate a two-electron transfer product. Major oxygen-insensitive nitroreductase in E.coli. The sequence is that of Oxygen-insensitive NADPH nitroreductase (nfsA) from Escherichia coli (strain K12).